Reading from the N-terminus, the 87-residue chain is MANHKSAMKRIKQTAKRTERNKHERSTLRTFIKRVREAVATKDQEAAKAALAVAIPVIDGAATKGIIHSSNASRNVSRLTKLVNTLG.

The segment covering 1-15 (MANHKSAMKRIKQTA) has biased composition (basic residues). The disordered stretch occupies residues 1–27 (MANHKSAMKRIKQTAKRTERNKHERST). Residues 16 to 27 (KRTERNKHERST) show a composition bias toward basic and acidic residues.

It belongs to the bacterial ribosomal protein bS20 family.

Functionally, binds directly to 16S ribosomal RNA. In Citrifermentans bemidjiense (strain ATCC BAA-1014 / DSM 16622 / JCM 12645 / Bem) (Geobacter bemidjiensis), this protein is Small ribosomal subunit protein bS20.